Consider the following 273-residue polypeptide: Large ribosomal subunit protein uL2 (273 aa).

Positions 228–273 (VDHPHGGGEGKTSGGRHPVTPWGFPTKGKKTRKNKRTSKFIVKKRK) are disordered. The span at 254–273 (KGKKTRKNKRTSKFIVKKRK) shows a compositional bias: basic residues.

Belongs to the universal ribosomal protein uL2 family. Part of the 50S ribosomal subunit. Forms a bridge to the 30S subunit in the 70S ribosome.

Functionally, one of the primary rRNA binding proteins. Required for association of the 30S and 50S subunits to form the 70S ribosome, for tRNA binding and peptide bond formation. It has been suggested to have peptidyltransferase activity; this is somewhat controversial. Makes several contacts with the 16S rRNA in the 70S ribosome. The polypeptide is Large ribosomal subunit protein uL2 (Rickettsia canadensis (strain McKiel)).